The chain runs to 392 residues: O-phospho-L-seryl-tRNA:Cys-tRNA synthase 2 (392 aa).

Pyridoxal 5'-phosphate-binding positions include 85 to 86 (AR), Asn-190, and 213 to 215 (SGH). N6-(pyridoxal phosphate)lysine is present on Lys-216.

The protein belongs to the SepCysS family. As to quaternary structure, homodimer. Interacts with SepRS. It depends on pyridoxal 5'-phosphate as a cofactor.

The enzyme catalyses O-phospho-L-seryl-tRNA(Cys) + hydrogen sulfide + H(+) = L-cysteinyl-tRNA(Cys) + phosphate. In terms of biological role, converts O-phospho-L-seryl-tRNA(Cys) (Sep-tRNA(Cys)) to L-cysteinyl-tRNA(Cys) (Cys-tRNA(Cys)). This Methanocorpusculum labreanum (strain ATCC 43576 / DSM 4855 / Z) protein is O-phospho-L-seryl-tRNA:Cys-tRNA synthase 2.